A 385-amino-acid polypeptide reads, in one-letter code: Multicilin (385 aa).

Residues methionine 1–serine 130 are necessary and sufficient for its degradation during the cell cycle. The segment at serine 86–alanine 111 is disordered. Positions serine 131 to serine 385 are necessary and sufficient for proper nuclear localization. The segment at proline 173–glutamine 245 is necessary and sufficient for interaction with GMNN and sufficient for homodimerization. Residues glutamate 179–leucine 227 are a coiled coil. Residues alanine 294–leucine 319 are disordered.

This sequence belongs to the geminin family. As to quaternary structure, heterodimer (via coiled-coil domain) with GMNN (via coiled-coil domain); targets GMNN to the nucleus. Can form homodimers (in vitro, via coiled-coil domain), but these are much less stable than the heterodimer formed with GMNN.

The protein localises to the nucleus. Its function is as follows. Transcription regulator specifically required for multiciliate cell differentiation. Acts in a multiprotein complex containing E2F4 and E2F5 that binds and activates genes required for centriole biogenesis. Required for the deuterosome-mediated acentriolar pathway. Plays a role in mitotic cell cycle progression by promoting cell cycle exit. Modulates GMNN activity by reducing its affinity for CDT1. This Homo sapiens (Human) protein is Multicilin.